The primary structure comprises 927 residues: Probable RNA-dependent RNA polymerase 4 (927 aa).

A disordered region spans residues 98–135 (GESPVQFPRTPGKKSCRASQAEVSLDREDPSPKFLRGD). Residues 121–135 (SLDREDPSPKFLRGD) are compositionally biased toward basic and acidic residues.

It belongs to the RdRP family.

It catalyses the reaction RNA(n) + a ribonucleoside 5'-triphosphate = RNA(n+1) + diphosphate. Functionally, probably involved in the RNA silencing pathway and required for the generation of small interfering RNAs (siRNAs). The sequence is that of Probable RNA-dependent RNA polymerase 4 (RDR4) from Arabidopsis thaliana (Mouse-ear cress).